Reading from the N-terminus, the 392-residue chain is Galactokinase (392 aa).

The alpha-D-galactose site is built by R37, E43, H44, and D46. The ATP site is built by G136, G138, S140, and S141. Residue D186 participates in alpha-D-galactose binding. The Proton acceptor role is filled by D186. S230 is subject to Phosphoserine. Y236 is a binding site for alpha-D-galactose.

Belongs to the GHMP kinase family. GalK subfamily. Homodimer.

The catalysed reaction is alpha-D-galactose + ATP = alpha-D-galactose 1-phosphate + ADP + H(+). Its pathway is carbohydrate metabolism; galactose metabolism. Functionally, catalyzes the transfer of a phosphate from ATP to alpha-D-galactose and participates in the first committed step in the catabolism of galactose. The chain is Galactokinase (GALK1) from Bos taurus (Bovine).